Here is a 319-residue protein sequence, read N- to C-terminus: Ribosomal RNA small subunit methyltransferase H (319 aa).

Residues 38–40 (GGH), D58, F82, D104, and Q111 contribute to the S-adenosyl-L-methionine site.

This sequence belongs to the methyltransferase superfamily. RsmH family.

It is found in the cytoplasm. The enzyme catalyses cytidine(1402) in 16S rRNA + S-adenosyl-L-methionine = N(4)-methylcytidine(1402) in 16S rRNA + S-adenosyl-L-homocysteine + H(+). Its function is as follows. Specifically methylates the N4 position of cytidine in position 1402 (C1402) of 16S rRNA. The chain is Ribosomal RNA small subunit methyltransferase H from Histophilus somni (strain 129Pt) (Haemophilus somnus).